The chain runs to 66 residues: DNA-directed RNA polymerase subunit omega (66 aa).

This sequence belongs to the RNA polymerase subunit omega family. The RNAP catalytic core consists of 2 alpha, 1 beta, 1 beta' and 1 omega subunit. When a sigma factor is associated with the core the holoenzyme is formed, which can initiate transcription.

It catalyses the reaction RNA(n) + a ribonucleoside 5'-triphosphate = RNA(n+1) + diphosphate. In terms of biological role, promotes RNA polymerase assembly. Latches the N- and C-terminal regions of the beta' subunit thereby facilitating its interaction with the beta and alpha subunits. This Clostridium botulinum (strain Alaska E43 / Type E3) protein is DNA-directed RNA polymerase subunit omega.